The following is a 293-amino-acid chain: 4-diphosphocytidyl-2-C-methyl-D-erythritol kinase (293 aa).

Lys16 is a catalytic residue. Pro99–Ser109 contacts ATP. Asp141 is a catalytic residue.

Belongs to the GHMP kinase family. IspE subfamily.

The catalysed reaction is 4-CDP-2-C-methyl-D-erythritol + ATP = 4-CDP-2-C-methyl-D-erythritol 2-phosphate + ADP + H(+). It participates in isoprenoid biosynthesis; isopentenyl diphosphate biosynthesis via DXP pathway; isopentenyl diphosphate from 1-deoxy-D-xylulose 5-phosphate: step 3/6. Its function is as follows. Catalyzes the phosphorylation of the position 2 hydroxy group of 4-diphosphocytidyl-2C-methyl-D-erythritol. This Burkholderia thailandensis (strain ATCC 700388 / DSM 13276 / CCUG 48851 / CIP 106301 / E264) protein is 4-diphosphocytidyl-2-C-methyl-D-erythritol kinase.